Here is a 253-residue protein sequence, read N- to C-terminus: DNA repair protein RecO (253 aa).

The protein belongs to the RecO family.

Involved in DNA repair and RecF pathway recombination. This is DNA repair protein RecO from Nitrobacter hamburgensis (strain DSM 10229 / NCIMB 13809 / X14).